The primary structure comprises 391 residues: Phosphoglycerate kinase (391 aa).

Residues 21-23 (DLN), R36, 59-62 (HLGR), R113, and R146 contribute to the substrate site. ATP contacts are provided by residues K197, E319, and 345-348 (GGDT).

Belongs to the phosphoglycerate kinase family. In terms of assembly, monomer.

The protein resides in the cytoplasm. The catalysed reaction is (2R)-3-phosphoglycerate + ATP = (2R)-3-phospho-glyceroyl phosphate + ADP. It functions in the pathway carbohydrate degradation; glycolysis; pyruvate from D-glyceraldehyde 3-phosphate: step 2/5. The polypeptide is Phosphoglycerate kinase (Shewanella halifaxensis (strain HAW-EB4)).